The sequence spans 156 residues: MGTSRLYTLVLVLQPERVLLGMKKRGFGAGRWNGFGGKVQEGETIEDGAKRELREESGLTVDTLHKVGQIMFEFVGEPELMDVHIFCTDSVQGTPVESDEMRPQWFQLDQIPFTDMWPDDSYWFPLLLQKKKFHGYFRFQGPNTILDYTLREVDKL.

The Nudix hydrolase domain maps to 3–132 (TSRLYTLVLV…WFPLLLQKKK (130 aa)). Residue Thr-8 coordinates 2-oxo-dATP. Residue Lys-23 coordinates 8-oxo-dGTP. Residues Asn-33 and 35-38 (FGGK) each bind 2-oxo-dATP. Mg(2+)-binding residues include Gly-36, Glu-52, Glu-55, Glu-56, and Glu-100. Residues 37–58 (GKVQEGETIEDGAKRELREESG) carry the Nudix box motif. 117 to 120 (WPDD) is a binding site for 2-oxo-dATP.

Belongs to the Nudix hydrolase family. Monomer. Mg(2+) is required as a cofactor.

It is found in the cytoplasm. Its subcellular location is the nucleus. The protein resides in the nucleus membrane. It localises to the cytoplasmic vesicle. The protein localises to the secretory vesicle. It is found in the acrosome. It catalyses the reaction 2-oxo-dATP + H2O = 2-oxo-dAMP + diphosphate + H(+). It carries out the reaction 2-oxo-ATP + H2O = 2-oxo-AMP + diphosphate + H(+). The enzyme catalyses 8-oxo-dGTP + H2O = 8-oxo-dGMP + diphosphate + H(+). The catalysed reaction is 8-oxo-dATP + H2O = 8-oxo-dAMP + diphosphate + H(+). It catalyses the reaction O(6)-methyl-dGTP + H2O = O(6)-methyl-dGMP + diphosphate + H(+). It carries out the reaction N(6)-methyl-dATP + H2O = N(6)-methyl-dAMP + diphosphate + H(+). The enzyme catalyses N(6)-methyl-ATP + H2O = N(6)-methyl-AMP + diphosphate + H(+). Oxidized purine nucleoside triphosphate hydrolase which is a prominent sanitizer of the oxidized nucleotide pool. Catalyzes the hydrolysis of 2-oxo-dATP (2-hydroxy-dATP) into 2-oxo-dAMP. Also has a significant hydrolase activity toward 2-oxo-ATP, 8-oxo-dGTP and 8-oxo-dATP. Through the hydrolysis of oxidized purine nucleoside triphosphates, prevents their incorporation into DNA and the subsequent transversions A:T to C:G and G:C to T:A. Also catalyzes the hydrolysis of methylated purine nucleoside triphosphate preventing their integration into DNA. Through this antimutagenic activity protects cells from oxidative stress. In Canis lupus familiaris (Dog), this protein is Oxidized purine nucleoside triphosphate hydrolase (NUDT1).